The primary structure comprises 1768 residues: Maestro heat-like repeat-containing protein family member 1 homolog (1768 aa).

6 HEAT repeats span residues 4-47, 164-203, 816-856, 1166-1204, 1483-1521, and 1731-1768; these read TSQV…HQPN, VHNP…AICS, QRLQ…AVHP, QSQM…ARGA, EQLL…CSST, and TISR…HDFH.

It belongs to the MROH1 family. In terms of assembly, homooligomer; homooligomerizes at lysosome scission sites.

It localises to the lysosome membrane. Its function is as follows. Lysosome fission factor. Recruited to lysosomes by rab-7 at scission sites and homooligomerizes to mediate the constriction and scission of lysosomal tubules. May sever membranes by inserting amphipathic helices into one bilayer leaflet. Lysosome fission is required to maintain their steady-state number, shape, size, composition and function, and to accomplish regeneration. The chain is Maestro heat-like repeat-containing protein family member 1 homolog from Caenorhabditis elegans.